Consider the following 556-residue polypeptide: Arginine--tRNA ligase (556 aa).

Positions 133–143 (ANPTGPIHIGH) match the 'HIGH' region motif.

This sequence belongs to the class-I aminoacyl-tRNA synthetase family. Monomer.

It is found in the cytoplasm. It catalyses the reaction tRNA(Arg) + L-arginine + ATP = L-arginyl-tRNA(Arg) + AMP + diphosphate. The sequence is that of Arginine--tRNA ligase from Dehalococcoides mccartyi (strain CBDB1).